The primary structure comprises 306 residues: ClpXP adapter protein SpxH (306 aa).

The protein belongs to the SpxH family. In terms of assembly, interacts with Spx.

Its subcellular location is the cytoplasm. Functionally, adapter protein required for efficient degradation of Spx by ClpXP under non-stress conditions. Interaction with Spx stabilizes Spx and exposes the C-terminus of Spx for recognition and proteolysis by ClpXP. The sequence is that of ClpXP adapter protein SpxH from Halalkalibacterium halodurans (strain ATCC BAA-125 / DSM 18197 / FERM 7344 / JCM 9153 / C-125) (Bacillus halodurans).